The primary structure comprises 438 residues: MLTILGFSMVTVFTILIMTKKVSPIVALTITPIVFALIGGFGKGIGDMILEGIQTVASSAALLLFAILFFGILIDAGLFDPLIEKILSIVKGDPVKIAIGSAVLAMLIALDGDGTTTYMITVSAMLPLYKRIGMNPMVMATLAMLSLSIVSGMTPWGGPATRAISVLGLDPSDFFVPLLPTMLGGIACVIFLAFLMGRKERNRIGIVQLEPRHITKDSSQSYMAATLESEQLKRPRLIYLNLFLVISIMVFIVLGTKHPSVLFLIGFVLALTINYPNVKMQKERIAEHSGNAITVVLLVFSAGVFAGILSGTKMVDAIAGSLISIIPSSMGGFFPVIVALTSIPFTFVLSNDAYYFGMVPIFAEAASAYGIEPVEIARASIMGQPVHLMSPLVASTVLLVSMLKMDLGSFQRFAVKWAVITSLVITLLAIITGAITIL.

12 consecutive transmembrane segments (helical) span residues 22 to 42, 59 to 79, 89 to 109, 137 to 157, 174 to 194, 237 to 257, 258 to 278, 292 to 312, 330 to 350, 356 to 376, 380 to 400, and 418 to 438; these read VSPI…GGFG, SAAL…AGLF, IVKG…MLIA, MVMA…TPWG, FFVP…FLAF, LIYL…LGTK, HPSV…YPNV, AITV…LSGT, MGGF…FVLS, FGMV…PVEI, SIMG…VLLV, and AVIT…ITIL.

Belongs to the CitM (TC 2.A.11) transporter family.

It is found in the cell membrane. Functionally, transports the free citrate anion. This is an uncharacterized protein from Bacillus subtilis (strain 168).